The primary structure comprises 376 residues: Chaperone protein DnaJ (376 aa).

The 65-residue stretch at 4-68 (DYYDILGVDR…DTRSRYDQFG (65 aa)) folds into the J domain. The segment at 135–217 (GGEKEIRIPH…CNGAGRRQVT (83 aa)) adopts a CR-type zinc-finger fold. Residues Cys-148, Cys-151, Cys-165, Cys-168, Cys-191, Cys-194, Cys-205, and Cys-208 each coordinate Zn(2+). 4 CXXCXGXG motif repeats span residues 148–155 (CQVCKGDG), 165–172 (CSTCNGQG), 191–198 (CPACNGQG), and 205–212 (CEVCNGAG).

Belongs to the DnaJ family. As to quaternary structure, homodimer. Requires Zn(2+) as cofactor.

Its subcellular location is the cytoplasm. Participates actively in the response to hyperosmotic and heat shock by preventing the aggregation of stress-denatured proteins and by disaggregating proteins, also in an autonomous, DnaK-independent fashion. Unfolded proteins bind initially to DnaJ; upon interaction with the DnaJ-bound protein, DnaK hydrolyzes its bound ATP, resulting in the formation of a stable complex. GrpE releases ADP from DnaK; ATP binding to DnaK triggers the release of the substrate protein, thus completing the reaction cycle. Several rounds of ATP-dependent interactions between DnaJ, DnaK and GrpE are required for fully efficient folding. Also involved, together with DnaK and GrpE, in the DNA replication of plasmids through activation of initiation proteins. This Crocosphaera subtropica (strain ATCC 51142 / BH68) (Cyanothece sp. (strain ATCC 51142)) protein is Chaperone protein DnaJ.